The chain runs to 510 residues: Maturase K (510 aa).

It belongs to the intron maturase 2 family. MatK subfamily.

The protein resides in the plastid. It is found in the chloroplast. Functionally, usually encoded in the trnK tRNA gene intron. Probably assists in splicing its own and other chloroplast group II introns. In Populus nigra (Lombardy poplar), this protein is Maturase K.